The following is a 163-amino-acid chain: Cytosolic iron-sulfur assembly component 2B (163 aa).

This sequence belongs to the MIP18 family. As to quaternary structure, component of the CIA complex. Component of the MMXD complex, which includes CIAO1, ERCC2, CIAO2B, MMS19 and SLC25A5. Interacts with CIAO1, ERCC2 and MMS19; the interactions are direct. Interacts with KIF4A; the interaction facilitates the transfer of Fe-S clusters to KIF4A to ensure proper localization of KIF4A to the mitotic machinery. Interacts with CCDC117; the interaction is direct.

It is found in the nucleus. It localises to the cytoplasm. The protein localises to the cytoskeleton. Its subcellular location is the spindle. Component of the cytosolic iron-sulfur protein assembly (CIA) complex, a multiprotein complex that mediates the incorporation of iron-sulfur cluster into extramitochondrial Fe/S proteins. As a CIA complex component and in collaboration with CIAO1 and MMS19, binds to and facilitates the assembly of most cytosolic-nuclear Fe/S proteins. As part of the mitotic spindle-associated MMXD complex it plays a role in chromosome segregation, probably by facilitating iron-sulfur cluster assembly into ERCC2/XPD. Together with MMS19, facilitates the transfer of Fe-S clusters to the motor protein KIF4A, which ensures proper localization of KIF4A to mitotic machinery components to promote the progression of mitosis. The chain is Cytosolic iron-sulfur assembly component 2B from Mus musculus (Mouse).